Reading from the N-terminus, the 66-residue chain is Large ribosomal subunit protein bL35 (66 aa).

A compositionally biased stretch (basic residues) spans 1–16; it reads MPKQKTHRASAKRFKR. Positions 1 to 20 are disordered; sequence MPKQKTHRASAKRFKRTGSG.

This sequence belongs to the bacterial ribosomal protein bL35 family.

This chain is Large ribosomal subunit protein bL35, found in Streptococcus thermophilus (strain ATCC BAA-250 / LMG 18311).